Consider the following 463-residue polypeptide: Glutamate--tRNA ligase (463 aa).

Positions 10–20 (PSPTGYLHIGG) match the 'HIGH' region motif. The short motif at 252-256 (KLSKR) is the 'KMSKS' region element. Residue Lys255 participates in ATP binding.

The protein belongs to the class-I aminoacyl-tRNA synthetase family. Glutamate--tRNA ligase type 1 subfamily. In terms of assembly, monomer.

It is found in the cytoplasm. It carries out the reaction tRNA(Glu) + L-glutamate + ATP = L-glutamyl-tRNA(Glu) + AMP + diphosphate. Functionally, catalyzes the attachment of glutamate to tRNA(Glu) in a two-step reaction: glutamate is first activated by ATP to form Glu-AMP and then transferred to the acceptor end of tRNA(Glu). The protein is Glutamate--tRNA ligase of Mycoplasmopsis agalactiae (strain NCTC 10123 / CIP 59.7 / PG2) (Mycoplasma agalactiae).